Here is a 121-residue protein sequence, read N- to C-terminus: Small ribosomal subunit protein uS13 (121 aa).

The tract at residues 94-121 (SLPVRGQNTKNNSRTRKGPRRTVANKKK) is disordered. Positions 106 to 121 (SRTRKGPRRTVANKKK) are enriched in basic residues.

This sequence belongs to the universal ribosomal protein uS13 family. In terms of assembly, part of the 30S ribosomal subunit. Forms a loose heterodimer with protein S19. Forms two bridges to the 50S subunit in the 70S ribosome.

Its function is as follows. Located at the top of the head of the 30S subunit, it contacts several helices of the 16S rRNA. In the 70S ribosome it contacts the 23S rRNA (bridge B1a) and protein L5 of the 50S subunit (bridge B1b), connecting the 2 subunits; these bridges are implicated in subunit movement. Contacts the tRNAs in the A and P-sites. The sequence is that of Small ribosomal subunit protein uS13 from Exiguobacterium sp. (strain ATCC BAA-1283 / AT1b).